The primary structure comprises 338 residues: Phenylalanine--tRNA ligase alpha subunit (338 aa).

Glu252 serves as a coordination point for Mg(2+).

It belongs to the class-II aminoacyl-tRNA synthetase family. Phe-tRNA synthetase alpha subunit type 1 subfamily. Tetramer of two alpha and two beta subunits. Mg(2+) is required as a cofactor.

The protein localises to the cytoplasm. The catalysed reaction is tRNA(Phe) + L-phenylalanine + ATP = L-phenylalanyl-tRNA(Phe) + AMP + diphosphate + H(+). The protein is Phenylalanine--tRNA ligase alpha subunit of Pseudomonas syringae pv. syringae (strain B728a).